A 349-amino-acid chain; its full sequence is Probable arabinogalactan endo-beta-1,4-galactanase A (349 aa).

The N-terminal stretch at 1 to 15 (MLLSFLPLLPLATAA) is a signal peptide. The N-linked (GlcNAc...) asparagine glycan is linked to N126. The active-site Proton donor is E150. The active-site Nucleophile is the E261.

It belongs to the glycosyl hydrolase 53 family.

It is found in the secreted. It carries out the reaction The enzyme specifically hydrolyzes (1-&gt;4)-beta-D-galactosidic linkages in type I arabinogalactans.. Its function is as follows. Endogalactanase involved in the degradation of plant cell wall polysaccharides, and more particularly of hairy regions of pectin. The sequence is that of Probable arabinogalactan endo-beta-1,4-galactanase A (galA) from Aspergillus terreus (strain NIH 2624 / FGSC A1156).